The sequence spans 429 residues: Na(+)/H(+) antiporter NhaA 1 (429 aa).

A run of 12 helical transmembrane segments spans residues 32-52 (ISGG…NSPW), 73-93 (LSVQ…VAGL), 111-131 (VVPV…YSLL), 140-160 (GWAI…AVVG), 170-190 (FLLT…AVAY), 193-213 (ELSV…TLLV), 219-239 (AWWL…ASGV), 243-263 (VAGV…AGGP), 284-304 (VAVP…LGGL), 316-336 (VVVG…WLVA), 349-369 (WVDV…SLLI), and 383-403 (HVKV…TVVL).

The protein belongs to the NhaA Na(+)/H(+) (TC 2.A.33) antiporter family.

The protein localises to the cell membrane. It carries out the reaction Na(+)(in) + 2 H(+)(out) = Na(+)(out) + 2 H(+)(in). In terms of biological role, na(+)/H(+) antiporter that extrudes sodium in exchange for external protons. In Frankia alni (strain DSM 45986 / CECT 9034 / ACN14a), this protein is Na(+)/H(+) antiporter NhaA 1.